Here is a 939-residue protein sequence, read N- to C-terminus: Nonsense-mediated mRNA decay factor SMG8 (939 aa).

2 disordered regions span residues 561-600 and 617-645; these read KICT…QLSP and LNES…ADTE. Residues 567 to 587 show a composition bias toward acidic residues; that stretch reads GEDENEDGETEEADEDTEEKE. The span at 617 to 629 shows a compositional bias: low complexity; it reads LNESQESSEQLSG.

This sequence belongs to the SMG8 family.

Involved in nonsense-mediated decay (NMD) of mRNAs containing premature stop codons. Probable component of kinase complex containing nonC and recruited to stalled ribosomes. This Drosophila ananassae (Fruit fly) protein is Nonsense-mediated mRNA decay factor SMG8.